A 270-amino-acid polypeptide reads, in one-letter code: Acyl-[acyl-carrier-protein]--UDP-N-acetylglucosamine O-acyltransferase (270 aa).

It belongs to the transferase hexapeptide repeat family. LpxA subfamily. As to quaternary structure, homotrimer.

Its subcellular location is the cytoplasm. The catalysed reaction is a (3R)-hydroxyacyl-[ACP] + UDP-N-acetyl-alpha-D-glucosamine = a UDP-3-O-[(3R)-3-hydroxyacyl]-N-acetyl-alpha-D-glucosamine + holo-[ACP]. It participates in glycolipid biosynthesis; lipid IV(A) biosynthesis; lipid IV(A) from (3R)-3-hydroxytetradecanoyl-[acyl-carrier-protein] and UDP-N-acetyl-alpha-D-glucosamine: step 1/6. Involved in the biosynthesis of lipid A, a phosphorylated glycolipid that anchors the lipopolysaccharide to the outer membrane of the cell. This Helicobacter pylori (strain HPAG1) protein is Acyl-[acyl-carrier-protein]--UDP-N-acetylglucosamine O-acyltransferase.